Consider the following 271-residue polypeptide: Potential ATP-binding protein (271 aa).

34 to 41 (GQPGVGKT) lines the ATP pocket.

This is Potential ATP-binding protein from Staphylococcus aureus.